Consider the following 776-residue polypeptide: Protein STRUBBELIG-RECEPTOR FAMILY 3 (776 aa).

An N-terminal signal peptide occupies residues 1 to 29 (MAAKRSIYCLLLLPLLLSLLIWIPSISLA). At 30–35 (ATNPDD) the chain is on the cytoplasmic side. The helical transmembrane segment at 36–56 (VAAINGLFAALGAPVLPGWIA) threads the bilayer. Residues 57-316 (SGGDPCGEAW…KGKNSSHTKK (260 aa)) are Extracellular-facing. Residue N72 is glycosylated (N-linked (GlcNAc...) asparagine). LRR repeat units follow at residues 99–120 (SIRGIDFSNNRIGGSIPSTLPV), 121–143 (TLQHFFLSANQFTGSIPESLGTL), 145–167 (FLNDMSLNDNLLSGELPDVFQNL), 169–191 (GLINLDISSNNISGTLPPSMENL), 193–215 (TLTTLRVQNNQLSGTLDVLQGLP), and 216–236 (LQDLNIENNLFSGPIPDKLLS). N179 carries N-linked (GlcNAc...) asparagine glycosylation. N-linked (GlcNAc...) asparagine glycosylation is found at N248 and N253. Residues 251-311 (MINSTSTAPS…SSENSKGKNS (61 aa)) are disordered. Over residues 254-268 (STSTAPSLSPSLSPT) the composition is skewed to low complexity. Positions 269-284 (KPAPTRPFSGVPPPPN) are enriched in pro residues. The span at 298–309 (SEGSSSENSKGK) shows a compositional bias: low complexity. N310 is a glycosylation site (N-linked (GlcNAc...) asparagine). The helical transmembrane segment at 317-337 (IILIAFAGVLVFIILVLAILL) threads the bilayer. At 338–776 (LLPKCARRRE…RHGSGDSTAD (439 aa)) the chain is on the cytoplasmic side. The tract at residues 355–440 (PHQVGADRGS…PPPPPPPPPP (86 aa)) is disordered. The span at 381-407 (RSEKVQREPFKKAGEEPKVLHDLERLR) shows a compositional bias: basic and acidic residues. Positions 426-440 (MPPPPPPPPPPPPPP) are enriched in pro residues. A Protein kinase domain is found at 485–763 (FAQENLIGSG…EVVQDLLDMI (279 aa)). ATP contacts are provided by residues 491–499 (IGSGMLGSV) and K513.

The protein belongs to the protein kinase superfamily. Ser/Thr protein kinase family. Expressed in seedlings, roots, stems, leaves, flowers and siliques.

Its subcellular location is the membrane. Its function is as follows. Not essential for epidermal patterning and not redundant with STRUBBELIG. The protein is Protein STRUBBELIG-RECEPTOR FAMILY 3 (SRF3) of Arabidopsis thaliana (Mouse-ear cress).